A 1079-amino-acid chain; its full sequence is DNA annealing helicase and endonuclease ZRANB3 (1079 aa).

One can recognise a Helicase ATP-binding domain in the interval 46 to 208 (IFALKRNGRC…FMQIEALFPQ (163 aa)). The interval 46 to 481 (IFALKRNGRC…GRKEKIQAEE (436 aa)) is DNA annealing helicase activity. 59 to 66 (DEMGLGKT) is an ATP binding site. A DEAH box motif is present at residues 157-160 (DESH). A Helicase C-terminal domain is found at 325-481 (AVKDYIKMML…GRKEKIQAEE (157 aa)). The PIP-box motif lies at 519–526 (QHDIRSFF). Ser569 carries the post-translational modification Phosphoserine. Residues 582–601 (ASEDHCSPSEETPSQSKQIR) form a disordered region. Over residues 590–600 (SEETPSQSKQI) the composition is skewed to polar residues. The segment at 621–650 (PVEGWQCSLCTYINNSELPYCEMCETPQGS) adopts a RanBP2-type zinc-finger fold. Residue Cys630 is modified to (Microbial infection) S-methylcysteine. The disordered stretch occupies residues 689 to 725 (LAQSEPGQLADSKEETPKIEKEDGLTSQPGNEQWKSS). Over residues 699–712 (DSKEETPKIEKEDG) the composition is skewed to basic and acidic residues. The segment covering 713–725 (LTSQPGNEQWKSS) has biased composition (polar residues). Positions 1011–1051 (PGEGHFWQVDHIKPVYGGGGQCSLDNLQTLCTVCHKERTAR) constitute an HNH domain. The interval 1011-1079 (PGEGHFWQVD…SDITRFLVKK (69 aa)) is endonuclease activity. The APIM motif motif lies at 1074-1078 (RFLVK).

This sequence belongs to the SNF2/RAD54 helicase family. Interacts (via PIP-box and RanBP2-type zinc finger) with PCNA (when PCNA is polyubiquitinated via 'Lys-63'-linked polyubiquitin). Post-translationally, (Microbial infection) Methylation at Cys-630 by enteropathogenic E.coli protein NleE or S.flexneri protein OspZ: methylation disrupts ability to bind 'Lys-63'-linked ubiquitin.

The protein resides in the nucleus. Its subcellular location is the chromosome. Its function is as follows. DNA annealing helicase and endonuclease required to maintain genome stability at stalled or collapsed replication forks by facilitating fork restart and limiting inappropriate recombination that could occur during template switching events. Recruited to the sites of stalled DNA replication by polyubiquitinated PCNA and acts as a structure-specific endonuclease that cleaves the replication fork D-loop intermediate, generating an accessible 3'-OH group in the template of the leading strand, which is amenable to extension by DNA polymerase. In addition to endonuclease activity, also catalyzes the fork regression via annealing helicase activity in order to prevent disintegration of the replication fork and the formation of double-strand breaks. The protein is DNA annealing helicase and endonuclease ZRANB3 of Homo sapiens (Human).